The primary structure comprises 214 residues: Large ribosomal subunit protein uL3 (214 aa).

Residues 130-151 (FSSNRASHGNSRSHNTPGSIGQ) show a composition bias toward polar residues. Residues 130-163 (FSSNRASHGNSRSHNTPGSIGQAQDPGRVFPGKR) form a disordered region. An N5-methylglutamine modification is found at Q153.

It belongs to the universal ribosomal protein uL3 family. Part of the 50S ribosomal subunit. Forms a cluster with proteins L14 and L19. Methylated by PrmB.

Its function is as follows. One of the primary rRNA binding proteins, it binds directly near the 3'-end of the 23S rRNA, where it nucleates assembly of the 50S subunit. This Chromobacterium violaceum (strain ATCC 12472 / DSM 30191 / JCM 1249 / CCUG 213 / NBRC 12614 / NCIMB 9131 / NCTC 9757 / MK) protein is Large ribosomal subunit protein uL3.